The primary structure comprises 544 residues: Putative lipase ATG15 (544 aa).

Residues methionine 1–alanine 45 lie on the Cytoplasmic side of the membrane. The helical; Signal-anchor for type II membrane protein transmembrane segment at valine 46 to phenylalanine 66 threads the bilayer. Residues alanine 67 to alanine 544 lie on the Lumenal side of the membrane. N-linked (GlcNAc...) asparagine glycosylation is found at asparagine 200, asparagine 229, and asparagine 234. Serine 362 (charge relay system) is an active-site residue. Residues proline 508–threonine 530 are disordered.

The protein belongs to the AB hydrolase superfamily. Lipase family. In terms of assembly, binds to both phosphatidylinositol (PI) and phosphatidylinositol 3,5-bisphosphate (PIP2).

Its subcellular location is the endosome. The protein resides in the multivesicular body membrane. The protein localises to the prevacuolar compartment membrane. It carries out the reaction a triacylglycerol + H2O = a diacylglycerol + a fatty acid + H(+). In terms of biological role, lipase which is essential for lysis of subvacuolar cytoplasm to vacuole targeted bodies and intravacuolar autophagic bodies. Involved in the lysis of intravacuolar multivesicular body (MVB) vesicles. The intravacuolar membrane disintegration by ATG15 is critical to life span extension. The protein is Putative lipase ATG15 (ATG15) of Eremothecium gossypii (strain ATCC 10895 / CBS 109.51 / FGSC 9923 / NRRL Y-1056) (Yeast).